The chain runs to 86 residues: Serine protease inhibitor Kazal-type 4 (86 aa).

Positions M1 to A26 are cleaved as a signal peptide. Residues F31 to C86 form the Kazal-like domain. 3 cysteine pairs are disulfide-bonded: C37-C68, C46-C65, and C54-C86.

In terms of tissue distribution, synthesized in duodenal goblet cells and in monocytes in bone marrow and blood.

The protein resides in the secreted. Its function is as follows. Inhibits the glucose-induced insulin secretion from perfused pancreas; also plays a role in the immune system. Does not inhibit trypsin. This chain is Serine protease inhibitor Kazal-type 4 (SPINK4), found in Sus scrofa (Pig).